Here is a 152-residue protein sequence, read N- to C-terminus: Large ribosomal subunit protein bL9 (152 aa).

It belongs to the bacterial ribosomal protein bL9 family.

Binds to the 23S rRNA. This Synechococcus sp. (strain WH7803) protein is Large ribosomal subunit protein bL9.